The primary structure comprises 187 residues: Threonylcarbamoyl-AMP synthase (187 aa).

Residues 4 to 187 (ILTLDNAVAT…DARSGQILRD (184 aa)) enclose the YrdC-like domain.

Belongs to the SUA5 family. TsaC subfamily.

The protein localises to the cytoplasm. The catalysed reaction is L-threonine + hydrogencarbonate + ATP = L-threonylcarbamoyladenylate + diphosphate + H2O. Its function is as follows. Required for the formation of a threonylcarbamoyl group on adenosine at position 37 (t(6)A37) in tRNAs that read codons beginning with adenine. Catalyzes the conversion of L-threonine, HCO(3)(-)/CO(2) and ATP to give threonylcarbamoyl-AMP (TC-AMP) as the acyladenylate intermediate, with the release of diphosphate. This is Threonylcarbamoyl-AMP synthase from Xanthomonas oryzae pv. oryzae (strain MAFF 311018).